A 389-amino-acid chain; its full sequence is Phosphopentomutase (389 aa).

Residues aspartate 9, aspartate 282, histidine 287, aspartate 323, histidine 324, and histidine 335 each contribute to the Mn(2+) site.

Belongs to the phosphopentomutase family. It depends on Mn(2+) as a cofactor.

The protein resides in the cytoplasm. The enzyme catalyses 2-deoxy-alpha-D-ribose 1-phosphate = 2-deoxy-D-ribose 5-phosphate. It catalyses the reaction alpha-D-ribose 1-phosphate = D-ribose 5-phosphate. It functions in the pathway carbohydrate degradation; 2-deoxy-D-ribose 1-phosphate degradation; D-glyceraldehyde 3-phosphate and acetaldehyde from 2-deoxy-alpha-D-ribose 1-phosphate: step 1/2. Isomerase that catalyzes the conversion of deoxy-ribose 1-phosphate (dRib-1-P) and ribose 1-phosphate (Rib-1-P) to deoxy-ribose 5-phosphate (dRib-5-P) and ribose 5-phosphate (Rib-5-P), respectively. The polypeptide is Phosphopentomutase (Pseudothermotoga lettingae (strain ATCC BAA-301 / DSM 14385 / NBRC 107922 / TMO) (Thermotoga lettingae)).